We begin with the raw amino-acid sequence, 824 residues long: AMP deaminase 2 (824 aa).

A disordered region spans residues 1–43; the sequence is MASYPGPGKSKAKYPFKKRAGLQASAAAPEARSGLGASPLQSA. Basic residues predominate over residues 10–20; sequence SKAKYPFKKRA. Arginine 44 is modified (omega-N-methylarginine). Phosphoserine is present on residues serine 45, serine 63, and serine 79. Tyrosine 90 is modified (phosphotyrosine). Phosphoserine occurs at positions 96 and 113. Position 133 is a phosphothreonine (threonine 133). Phosphoserine occurs at positions 135 and 137. Zn(2+) contacts are provided by histidine 364 and histidine 366. Substrate-binding positions include histidine 366 and 435-440; that span reads KFNAKY. Residue histidine 633 coordinates Zn(2+). Glutamate 636 is a substrate binding site. The active-site Proton acceptor is the histidine 655. Aspartate 710 is a binding site for Zn(2+). 711 to 714 contacts substrate; it reads DPLQ.

Belongs to the metallo-dependent hydrolases superfamily. Adenosine and AMP deaminases family. Homotetramer. Zn(2+) serves as cofactor.

It carries out the reaction AMP + H2O + H(+) = IMP + NH4(+). It functions in the pathway purine metabolism; IMP biosynthesis via salvage pathway; IMP from AMP: step 1/1. AMP deaminase plays a critical role in energy metabolism. Catalyzes the deamination of AMP to IMP and plays an important role in the purine nucleotide cycle. The polypeptide is AMP deaminase 2 (Mus musculus (Mouse)).